Consider the following 234-residue polypeptide: Glycerol-3-phosphate acyltransferase (234 aa).

The next 6 helical transmembrane spans lie at 4 to 24 (LLAILVVSYIVGSIPTSLIAG), 56 to 76 (TVTLIDIIKGVVAAVSVVAFF), 90 to 110 (VALRLLAGMSAVIGHVFTVFA), 122 to 142 (AGMLIGIAPVSMLMVIGVFLL), 152 to 172 (VASILAAIAFPLIIAIRKYLF), and 191 to 211 (FHDSLDYHLIIFGLIVAIAII).

This sequence belongs to the PlsY family. In terms of assembly, probably interacts with PlsX.

Its subcellular location is the cell inner membrane. It carries out the reaction an acyl phosphate + sn-glycerol 3-phosphate = a 1-acyl-sn-glycero-3-phosphate + phosphate. Its pathway is lipid metabolism; phospholipid metabolism. Catalyzes the transfer of an acyl group from acyl-phosphate (acyl-PO(4)) to glycerol-3-phosphate (G3P) to form lysophosphatidic acid (LPA). This enzyme utilizes acyl-phosphate as fatty acyl donor, but not acyl-CoA or acyl-ACP. The polypeptide is Glycerol-3-phosphate acyltransferase (Chlorobium chlorochromatii (strain CaD3)).